The chain runs to 427 residues: Homeobox protein knotted-1-like 3 (427 aa).

Disordered regions lie at residues 19–49 (QTHHQHQQYQSDQPDPNSKPPEPHHSFQPAP) and 272–291 (TGVSPGEGTSATMSDDEDDQ). Positions 272–284 (TGVSPGEGTSATM) are enriched in polar residues. The 21-residue stretch at 330 to 350 (ELKHELKQGYKEKIVDIREEI) folds into the ELK domain. Positions 351–414 (LRKRRAGKLP…NQRKRNWHSN (64 aa)) form a DNA-binding region, homeobox; TALE-type.

This sequence belongs to the TALE/KNOX homeobox family. In terms of tissue distribution, maximally expressed in sepals, petals and fully expanded leaves. Also expressed in other flower organs and in developing leaves. Low level expression in stem internodes.

The protein localises to the nucleus. This chain is Homeobox protein knotted-1-like 3, found in Malus domestica (Apple).